A 155-amino-acid chain; its full sequence is Small ribosomal subunit protein uS7c (155 aa).

It belongs to the universal ribosomal protein uS7 family. As to quaternary structure, part of the 30S ribosomal subunit.

The protein localises to the plastid. Its subcellular location is the chloroplast. Its function is as follows. One of the primary rRNA binding proteins, it binds directly to 16S rRNA where it nucleates assembly of the head domain of the 30S subunit. In Typha angustifolia (Narrow leaf cattail), this protein is Small ribosomal subunit protein uS7c (rps7).